The chain runs to 201 residues: MDVLVPFAAREPKTRLAGTLDADERAAFARAMLLDVCDAVEAAGGEPTVLATEPLAIEQPVVVDKRPLTPAIDAHLSPPAAVVMADVALVTPAALRRLFATTGDVVIAPGLGGGTNALVVRADGFTVDYHGTSVRDHRRAAEGAGIDARSVDSFRLAVDIDEPTDLAEVLLHGDGRSADWLKNAGFRLAETDGRTTVERRG.

The protein belongs to the CofC family. Homodimer.

The enzyme catalyses (2S)-2-phospholactate + GTP + H(+) = (2S)-lactyl-2-diphospho-5'-guanosine + diphosphate. Its pathway is cofactor biosynthesis; coenzyme F420 biosynthesis. Functionally, guanylyltransferase that catalyzes the activation of (2S)-2-phospholactate (2-PL) as (2S)-lactyl-2-diphospho-5'-guanosine, via the condensation of 2-PL with GTP. It is involved in the biosynthesis of coenzyme F420, a hydride carrier cofactor. The polypeptide is 2-phospho-L-lactate guanylyltransferase (Natronomonas pharaonis (strain ATCC 35678 / DSM 2160 / CIP 103997 / JCM 8858 / NBRC 14720 / NCIMB 2260 / Gabara) (Halobacterium pharaonis)).